Reading from the N-terminus, the 90-residue chain is uncharacterized protein (90 aa).

This is an uncharacterized protein from Aedes vexans (Inland floodwater mosquito).